The chain runs to 200 residues: Probable GTP-binding protein EngB (200 aa).

Residues Ser-26–Lys-200 enclose the EngB-type G domain. Residues Gly-34–Ser-41, Gly-61–Gln-65, Asp-80–Gly-83, Thr-147–Asp-150, and Val-179–Ser-181 each bind GTP. Ser-41 and Thr-63 together coordinate Mg(2+).

The protein belongs to the TRAFAC class TrmE-Era-EngA-EngB-Septin-like GTPase superfamily. EngB GTPase family. Requires Mg(2+) as cofactor.

Functionally, necessary for normal cell division and for the maintenance of normal septation. The sequence is that of Probable GTP-binding protein EngB from Ehrlichia ruminantium (strain Gardel).